The primary structure comprises 120 residues: uncharacterized protein (120 aa).

The signal sequence occupies residues 1 to 16; that stretch reads MFKFILLCFCINFAFS.

This is an uncharacterized protein from Acheta domesticus (House cricket).